A 160-amino-acid chain; its full sequence is Probable prefoldin subunit 5 (160 aa).

Belongs to the prefoldin subunit alpha family. In terms of assembly, heterohexamer of two PFD-alpha type and four PFD-beta type subunits.

Binds specifically to cytosolic chaperonin (c-CPN) and transfers target proteins to it. Binds to nascent polypeptide chain and promotes folding in an environment in which there are many competing pathways for nonnative proteins. The chain is Probable prefoldin subunit 5 (pfdn5) from Dictyostelium discoideum (Social amoeba).